Reading from the N-terminus, the 140-residue chain is Granulocyte-macrophage colony-stimulating factor (140 aa).

An N-terminal signal peptide occupies residues 1–17 (MWLQNLLLLGTVVCSIC). S24 carries O-linked (GalNAc...) serine glycosylation. The O-linked (GalNAc...) threonine glycan is linked to T27. 3 N-linked (GlcNAc...) asparagine glycosylation sites follow: N45, N55, and N87. 2 cysteine pairs are disulfide-bonded: C72-C114 and C106-C139.

It belongs to the GM-CSF family. In terms of assembly, monomer. The signaling GM-CSF receptor complex is a dodecamer of two head-to-head hexamers of two alpha, two beta, and two ligand subunits.

Its subcellular location is the secreted. Functionally, cytokine that stimulates the growth and differentiation of hematopoietic precursor cells from various lineages, including granulocytes, macrophages, eosinophils and erythrocytes. In Cavia porcellus (Guinea pig), this protein is Granulocyte-macrophage colony-stimulating factor (CSF2).